We begin with the raw amino-acid sequence, 340 residues long: Myb-related protein Zm1 (340 aa).

2 consecutive HTH myb-type domains span residues 11 to 63 (KVGL…INYL) and 64 to 118 (RPDL…KKKV). DNA-binding regions (H-T-H motif) lie at residues 39–63 (WRALPKQAGLLRCGKSCRLRWINYL) and 91–114 (WSKIAACLPGRTDNEIKNVWNTHL). Positions 116-126 (KKVAQREKKKA) are enriched in basic residues. 2 disordered regions span residues 116–173 (KKVA…DATD) and 190–209 (DGAPPAAQPMPSPSSSSSLT). Over residues 133-166 (AGTPATAPLSSATSSTTTHNSSGGSDSGDQCGTS) the composition is skewed to low complexity.

The protein resides in the nucleus. Its function is as follows. Transcription factor that positively regulates genes involved in anthocyanin biosynthesis such as A1. The chain is Myb-related protein Zm1 from Zea mays (Maize).